The following is a 231-amino-acid chain: Protein HHL1, chloroplastic (231 aa).

Residues 1-39 constitute a chloroplast transit peptide; sequence MEVSMSLNALTRLPLKNTGRFEEVGLARHSLFSSRTACR. Residues 93-113 form a helical membrane-spanning segment; the sequence is YLWYPLSIIAGGTTAKIMVAA. Residues 206–231 form a disordered region; it reads SFGKLSSLNPGSDEKTEETSDEKAKA. Residues 217–231 are compositionally biased toward basic and acidic residues; the sequence is SDEKTEETSDEKAKA.

As to quaternary structure, interacts with psbB, psbC and LQY1, but not with psbA or psbD.

Its subcellular location is the plastid. The protein localises to the chloroplast thylakoid membrane. In terms of biological role, involved in photoprotection. Forms a complex with LQY1 that is involved in the repair and reassembly cycle of the PSII-LHCII supercomplex under high-light conditions. May function in guiding the release of psbC from PSII core monomers. This Arabidopsis thaliana (Mouse-ear cress) protein is Protein HHL1, chloroplastic.